Reading from the N-terminus, the 338-residue chain is MNFRRRLCTAALIAALPLASQAQNNTLLLNSVLAPQNPMTKMIVKPWAEKIAQVTEGRVKVDVAPSSLAAPQQQLASVNKGVFDIAYQFHGLLTDQVKLNQIAQLPFVNTTARGSSVALWRTYQKHFAKANELGEVQVLALFVQPPGVMFGMKGPIDGMDKLKGRKVYALPGVPSAMMESAGAAVVAAPGARSYEIVSGKTVDAFVGYPTSDAEGLKTLSYATDVTDIPGNLTAVSWVLFMNKKRWAALSEKDRKAIESISGEAFAQGMKQYDDLETKVRSEAAAKGIKFHMANDAFVKELQTLATPITQAWLKDASSRGVNGQEALDFYRAQAAANR.

Residues 1–22 (MNFRRRLCTAALIAALPLASQA) form the signal peptide.

As to quaternary structure, part of a two-component transport system composed of TsaT and TsaS.

It localises to the cell outer membrane. Involved in the uptake of p-toluenesulphonate (TSA). Forms a large, general diffusion pore with a preference for anions. This is Outer membrane transporter protein TsaT (tsaT) from Comamonas testosteroni (Pseudomonas testosteroni).